The sequence spans 712 residues: Polyribonucleotide nucleotidyltransferase (712 aa).

The Mg(2+) site is built by Asp487 and Asp493. Residues 554-613 enclose the KH domain; it reads PRIEVMNIPVDKIREVIGSGGKVIREIVEKTGAKINIEDDGTVKIASSSGKEIEAARKWI. The 69-residue stretch at 623 to 691 folds into the S1 motif domain; it reads GQVYEGTVVK…ERGKVRLSMK (69 aa).

This sequence belongs to the polyribonucleotide nucleotidyltransferase family. Mg(2+) serves as cofactor.

The protein resides in the cytoplasm. The catalysed reaction is RNA(n+1) + phosphate = RNA(n) + a ribonucleoside 5'-diphosphate. Its function is as follows. Involved in mRNA degradation. Catalyzes the phosphorolysis of single-stranded polyribonucleotides processively in the 3'- to 5'-direction. The sequence is that of Polyribonucleotide nucleotidyltransferase from Rhizobium johnstonii (strain DSM 114642 / LMG 32736 / 3841) (Rhizobium leguminosarum bv. viciae).